Reading from the N-terminus, the 361-residue chain is Peptide chain release factor 1 (361 aa).

Gln237 bears the N5-methylglutamine mark. The disordered stretch occupies residues Ala286–Ser306.

This sequence belongs to the prokaryotic/mitochondrial release factor family. In terms of processing, methylated by PrmC. Methylation increases the termination efficiency of RF1.

The protein localises to the cytoplasm. Peptide chain release factor 1 directs the termination of translation in response to the peptide chain termination codons UAG and UAA. The chain is Peptide chain release factor 1 from Coxiella burnetii (strain CbuK_Q154) (Coxiella burnetii (strain Q154)).